A 152-amino-acid chain; its full sequence is Xanthine-guanine phosphoribosyltransferase (152 aa).

5-phospho-alpha-D-ribose 1-diphosphate contacts are provided by residues 37–38, arginine 69, and 88–96; these read RG and DDLVDTGGT. Position 69 (arginine 69) interacts with GMP. Residue aspartate 89 coordinates Mg(2+). Aspartate 92 and isoleucine 135 together coordinate guanine. The xanthine site is built by aspartate 92 and isoleucine 135. GMP is bound by residues 92-96 and 134-135; these read DTGGT and WI.

The protein belongs to the purine/pyrimidine phosphoribosyltransferase family. XGPT subfamily. Homotetramer. Mg(2+) is required as a cofactor.

The protein localises to the cell inner membrane. It catalyses the reaction GMP + diphosphate = guanine + 5-phospho-alpha-D-ribose 1-diphosphate. The catalysed reaction is XMP + diphosphate = xanthine + 5-phospho-alpha-D-ribose 1-diphosphate. It carries out the reaction IMP + diphosphate = hypoxanthine + 5-phospho-alpha-D-ribose 1-diphosphate. It participates in purine metabolism; GMP biosynthesis via salvage pathway; GMP from guanine: step 1/1. The protein operates within purine metabolism; XMP biosynthesis via salvage pathway; XMP from xanthine: step 1/1. Functionally, purine salvage pathway enzyme that catalyzes the transfer of the ribosyl-5-phosphate group from 5-phospho-alpha-D-ribose 1-diphosphate (PRPP) to the N9 position of the 6-oxopurines guanine and xanthine to form the corresponding ribonucleotides GMP (guanosine 5'-monophosphate) and XMP (xanthosine 5'-monophosphate), with the release of PPi. To a lesser extent, also acts on hypoxanthine. The polypeptide is Xanthine-guanine phosphoribosyltransferase (Citrobacter koseri (strain ATCC BAA-895 / CDC 4225-83 / SGSC4696)).